The chain runs to 255 residues: MWIGIISLFPEMFRAITDYGVTGRAVKNGLLSIESWSPRDFAHDRHRTVDDRPYGGGPGMLMMVQPLRDAIHAAKAAAGEGAKVIYLSPQGRKLDQAGVSELATNQKLILVCGRYEGIDERVIQTEIDEEWSIGDYVLSGGELPAMTLIDSVSRFIPGVLGHEASATEDSFADGLLDCPHYTRPEVLEEMEVPPVLLSGNHAEIRRWRLKQSLGRTWLRRPELLENLALTEEQAKLLAQFKSEHAQQQHKHDGQA.

S-adenosyl-L-methionine-binding positions include G113 and 133-138; that span reads IGDYVL.

This sequence belongs to the RNA methyltransferase TrmD family. Homodimer.

Its subcellular location is the cytoplasm. It catalyses the reaction guanosine(37) in tRNA + S-adenosyl-L-methionine = N(1)-methylguanosine(37) in tRNA + S-adenosyl-L-homocysteine + H(+). Its function is as follows. Specifically methylates guanosine-37 in various tRNAs. This Klebsiella pneumoniae (strain 342) protein is tRNA (guanine-N(1)-)-methyltransferase.